A 321-amino-acid polypeptide reads, in one-letter code: Putative membrane-bound redox modulator Alx (321 aa).

The Periplasmic segment spans residues 1–6 (MNTVGT). The chain crosses the membrane as a helical span at residues 7 to 27 (PLLWGGFAVVVTIMLAIDLLL). The Cytoplasmic segment spans residues 28 to 43 (QGRRGAHAMTMKQAAA). The chain crosses the membrane as a helical span at residues 44-64 (WSLVWVTLSLLFNAAFWWYLV). Topologically, residues 65–89 (QTEGRAVADPQALAFLTGYLIEKSL) are periplasmic. A helical membrane pass occupies residues 90-110 (AVDNVFVWLMLFSYFSVPAAL). Topologically, residues 111–113 (QRR) are cytoplasmic. The chain crosses the membrane as a helical span at residues 114 to 134 (VLVYGVLGAIVLRTIMIFTGS). Residue W135 is a topological domain, periplasmic. A helical transmembrane segment spans residues 136 to 156 (LISQFDWILYIFGAFLLFTGV). Residues 157–198 (KMALAHEDESGIGDKPLVRWLRGHLRMTDTIDNEHFFVRKNG) are Cytoplasmic-facing. The chain crosses the membrane as a helical span at residues 199–219 (LLYATPLMLVLILVELSDVIF). Over 220 to 225 (AVDSIP) the chain is Periplasmic. A helical membrane pass occupies residues 226–246 (AIFAVTTDPFIVLTSNLFAIL). At 247 to 261 (GLRAMYFLLAGVAER) the chain is on the cytoplasmic side. Residues 262-282 (FSMLKYGLAVILVFIGIKMLI) form a helical membrane-spanning segment. Topologically, residues 283-286 (VDFY) are periplasmic. The chain crosses the membrane as a helical span at residues 287–307 (HIPIAVSLGVVFGILVMTFII). At 308 to 321 (NAWVNYRHDKQRVE) the chain is on the cytoplasmic side.

It belongs to the TerC family.

The protein resides in the cell inner membrane. Functionally, has been proposed to be a redox modulator. The protein is Putative membrane-bound redox modulator Alx (alx) of Escherichia coli O6:H1 (strain CFT073 / ATCC 700928 / UPEC).